We begin with the raw amino-acid sequence, 131 residues long: NADPH-dependent 7-cyano-7-deazaguanine reductase (131 aa).

The active-site Thioimide intermediate is Cys48. Asp55 functions as the Proton donor in the catalytic mechanism. Residues 70–72 and 89–90 each bind substrate; these read VEL and QE.

It belongs to the GTP cyclohydrolase I family. QueF type 1 subfamily.

The protein localises to the cytoplasm. It carries out the reaction 7-aminomethyl-7-carbaguanine + 2 NADP(+) = 7-cyano-7-deazaguanine + 2 NADPH + 3 H(+). It participates in tRNA modification; tRNA-queuosine biosynthesis. Catalyzes the NADPH-dependent reduction of 7-cyano-7-deazaguanine (preQ0) to 7-aminomethyl-7-deazaguanine (preQ1). This chain is NADPH-dependent 7-cyano-7-deazaguanine reductase, found in Caldicellulosiruptor bescii (strain ATCC BAA-1888 / DSM 6725 / KCTC 15123 / Z-1320) (Anaerocellum thermophilum).